The primary structure comprises 556 residues: Interleukin-1 receptor-like 1 (556 aa).

The signal sequence occupies residues 1-18 (MGFWILAILTILMYSTAA). Ig-like C2-type domains lie at 19-103 (KFSK…ANVT) and 114-197 (PDYL…VTAT). The Extracellular portion of the chain corresponds to 19-328 (KFSKQSWGLE…SRKNPIDHHS (310 aa)). C36 and C87 are disulfide-bonded. Residues N54, N95, N101, N140, and N191 are each glycosylated (N-linked (GlcNAc...) asparagine). Intrachain disulfides connect C111–C151 and C133–C181. The flexible linker stretch occupies residues 198 to 211 (RSFTVKDEQGFSLF). In terms of domain architecture, Ig-like C2-type 3 spans 212–319 (PVIGAPAQNE…GLRRHTVRLS (108 aa)). 3 N-linked (GlcNAc...) asparagine glycosylation sites follow: N232, N254, and N273. Intrachain disulfides connect C235–C303 and C238–C282. A Glycyl lysine isopeptide (Lys-Gly) (interchain with G-Cter in ubiquitin) cross-link involves residue K321. A helical transmembrane segment spans residues 329-349 (IYCIIAVCSVFLMLINVLVII). Over 350–556 (LKMFWIEATL…SLTPLAAQKQ (207 aa)) the chain is Cytoplasmic. In terms of domain architecture, TIR spans 375-535 (KLYDAYVVYP…KFWKHVRYQM (161 aa)). Residue E461 is part of the active site.

This sequence belongs to the interleukin-1 receptor family. Interacts with MYD88, IRAK1, IRAK4, and TRAF6. Bound to its ligand IL-33, interacts with IL1RAP to form the minimal interleukin-33 signaling complex with a 1:1:1 stoichiometry. Interacts with KIT (bound to KITLG/SCF). A mast cell-specific KITLG/SCF-induced interleukin-33 signaling complex contains IL1RL1, IL1RAP, KIT and MYD88. Interacts with TMED1. Ubiquitinated at Lys-321 in a FBXL19-mediated manner; leading to proteasomal degradation. Ubiquitination by TRAF6 via 'Lys-27'-linked polyubiquitination and deubiquitination by USP38 serves as a critical regulatory mechanism for fine-tuning IL1RL1-mediated inflammatory response. Highly expressed in kidney, lung, placenta, stomach, skeletal muscle, colon and small intestine. Isoform A is prevalently expressed in the lung, testis, placenta, stomach and colon. Isoform B is more abundant in the brain, kidney and the liver. Isoform C is not detected in brain, heart, liver, kidney and skeletal muscle. Expressed on T-cells in fibrotic liver; at protein level. Overexpressed in fibrotic and cirrhotic liver.

It localises to the cell membrane. The protein localises to the secreted. It carries out the reaction NAD(+) + H2O = ADP-D-ribose + nicotinamide + H(+). Receptor for interleukin-33 (IL-33) which plays crucial roles in innate and adaptive immunity, contributing to tissue homeostasis and responses to environmental stresses together with coreceptor IL1RAP. Its stimulation recruits MYD88, IRAK1, IRAK4, and TRAF6, followed by phosphorylation of MAPK3/ERK1 and/or MAPK1/ERK2, MAPK14, and MAPK8. Possibly involved in helper T-cell function. Upon tissue injury, induces UCP2-dependent mitochondrial rewiring that attenuates the generation of reactive oxygen species and preserves the integrity of Krebs cycle required for persistent production of itaconate and subsequent GATA3-dependent differentiation of inflammation-resolving alternatively activated macrophages. In terms of biological role, inhibits IL-33 signaling. The sequence is that of Interleukin-1 receptor-like 1 (IL1RL1) from Homo sapiens (Human).